The sequence spans 371 residues: Putative glutamate--cysteine ligase 2 (371 aa).

Belongs to the glutamate--cysteine ligase type 2 family. YbdK subfamily. As to quaternary structure, homodimer.

It catalyses the reaction L-cysteine + L-glutamate + ATP = gamma-L-glutamyl-L-cysteine + ADP + phosphate + H(+). In terms of biological role, ATP-dependent carboxylate-amine ligase which exhibits weak glutamate--cysteine ligase activity. The protein is Putative glutamate--cysteine ligase 2 of Klebsiella pneumoniae (strain 342).